A 320-amino-acid chain; its full sequence is Olfactory receptor 2T12 (320 aa).

At 1–23 (MEMRNTTPDFILLGLFNHTRAHQ) the chain is on the extracellular side. A glycan (N-linked (GlcNAc...) asparagine) is linked at Asn17. Residues 24 to 47 (VLFMMLLATVLTSLFSNALMILLI) form a helical membrane-spanning segment. The Cytoplasmic portion of the chain corresponds to 48–55 (HWDHRLHR). A helical membrane pass occupies residues 56–77 (PMYFLLSQLSLMDMMLVSTTVP). Topologically, residues 78-98 (KMAADYLTGNKAISRAGCGVQ) are extracellular. Residues Cys95 and Cys187 are joined by a disulfide bond. Residues 99–118 (IFFLPTLGGGECFLLAAMAY) traverse the membrane as a helical segment. Over 119–137 (DRYAAVCHPLRYPTLMSWQ) the chain is Cytoplasmic. The chain crosses the membrane as a helical span at residues 138–156 (LCLRMTMSSWLLGAADGLL). Topologically, residues 157–193 (QAVATLSFPYCGAHEIDHFFCEAPVLVRLACADTSVF) are extracellular. The helical transmembrane segment at 194 to 217 (ENAMYICCVLMLLVPFSLILSSYG) threads the bilayer. At 218–234 (LILAAVLLMRSTEARKK) the chain is on the cytoplasmic side. Residues 235-257 (AFATCSSHVAVVGLFYGAGIFTY) traverse the membrane as a helical segment. Residues 258-270 (MRPKSHRSTNHDK) are Extracellular-facing. The helical transmembrane segment at 271-290 (VVSAFYTMFTPLLNPLIYSV) threads the bilayer. Residues 291-320 (RNSEVKEALKRWLGTCVNLKHQQNEAHRSR) are Cytoplasmic-facing.

This sequence belongs to the G-protein coupled receptor 1 family.

The protein resides in the cell membrane. Odorant receptor. The sequence is that of Olfactory receptor 2T12 (OR2T12) from Homo sapiens (Human).